Reading from the N-terminus, the 1306-residue chain is MALRPGAGASGAAGAGAGPGGAGSFMFPVAGGMRPPQAGLIPMQQQGFPMVSVMQPNMQGMMGMNYSSQMSQGPIAMQAGIPMGPMPAAGVPFLGQPPFLSMRPAGPQYTPDMQKQFAEEQQKRFEQQQKLLEEERKRRQFEEQKQKLRLLSSVKPKTGEKNRDDALEAIKGNLDGFSRDAKMHPTPASHPKKQGPSLEEKLLVSCDVSASGQEHIKLNTPDAGHKAIVPGSSKNCPGLMAHNRGAVDGCVSGPASAEAEKTSDQTLSKEESGVGVFPSQDPAQSRMPPWIYNESLVPDAYKKILETTMTPTGIDTAKLYPILMSSGLPRETLGQIWALANRTTPGRLTKEELYTVLAMVAVTQRGVPAMSPDALSQFPAAPIPTLSGFPMTLPTPVSQPTAMPSGPTGSMPLTLGQPIMGINLVGPVGGAAAPTSSGFMPAYPSNQVGKTEEDDFQDFQDASKSGSIDDSFTDFQEMPASSKTSNSQHGNSAPSLLIPFPGTKASTDKYAVFKGISTDKPSENPASFGESGDKYSAFRELEQTTDSKPLGESFAEFRSTGTDDGFTDFKTADSVSPLEPPTKDTFPSAFASGAAQQTQTQVKTPLNLEDLDMFSSVDCSGEKQVPFSATFSTAKSVSTRPQPAGSAAASAALASTKTSSLADDFGEFNLFGEYSNPASAGEQDDFADFMAFGNSSISSEPKASDKYEALREEVSPSPLSSSTVEGAQHPPAAATKYDVFKQLSLEGAGLAMEEFKENTSSTKSEDDFADFHSSKFSSTSSDKSLGEKAVAFRHAKEDSSSVKSLDLPSIGGSSVGKEDSEDALSVQFDMKLADVGGDLKHVMSDSSLDLPTVSGQHPPAADTEDLSCAAFGSCSSHFTVSTLTSCEWSDRADALQGRKLSPFVLSAGSRSFSATSNLHTKEISFGSSENITMSSLSKGSALASEDALPETAFPAFASFKDMMPQTTEQKEFESGDFQDFTRQDMPTVDRSQETSCPSPASSVASHETPKEGADDFGEFQSEKSKISKFDFLVANSQSKMKSSEEMIKSELATFDLSVQGSHKRSLSLGDKEISRSSPSPALEQPFRDRSNTLSERAALPVIRDKYKDLTGEVEENERYAYEWQRCLGSALDVIKKANDTLNGISSSAVCTEVIQSAQGMEYLLGVVEVYRVTKRVELGIKATAVCSEKLQQLLKDIDKVWNNLIGFMSLATLTPDENSLDFSSCMLRPGIKNAQELACGVCLLNVDSRSRKEETPAEEQPKKAFNSETDSFKLAYGGHQYHASCANFWINCVEPKPPGLLLPDLL.

Residues 113–153 (MQKQFAEEQQKRFEQQQKLLEEERKRRQFEEQKQKLRLLSS) are a coiled coil. 2 disordered regions span residues 176-196 (GFSRDAKMHPTPASHPKKQGP) and 252-285 (SGPASAEAEKTSDQTLSKEESGVGVFPSQDPAQS). A compositionally biased stretch (basic and acidic residues) spans 258 to 272 (EAEKTSDQTLSKEES). The EH domain maps to 293 to 404 (NESLVPDAYK…TPVSQPTAMP (112 aa)). The DFXDF motif 1 motif lies at 455–459 (DFQDF). The tract at residues 460–494 (QDASKSGSIDDSFTDFQEMPASSKTSNSQHGNSAP) is disordered. Ser-471 carries the post-translational modification Phosphoserine. Position 509 is an N6-acetyllysine (Lys-509). Residues 514-778 (KGISTDKPSE…ADFHSSKFSS (265 aa)) are interaction with AP1G1. Residues 559–601 (STGTDDGFTDFKTADSVSPLEPPTKDTFPSAFASGAAQQTQTQ) are disordered. Ser-576 carries the post-translational modification Phosphoserine. Residues 661–673 (LADDFGEFNLFGE) are interaction with AP1G1, AP1G2 and GGA1. The DFXDF motif 2 signature appears at 685–689 (DFADF). A disordered region spans residues 697–730 (ISSEPKASDKYEALREEVSPSPLSSSTVEGAQHP). Residues 702–714 (KASDKYEALREEV) show a composition bias toward basic and acidic residues. Ser-715 is modified (phosphoserine). Position 736 is an N6-acetyllysine (Lys-736). A phosphoserine mark is found at Ser-744 and Ser-764. The DFXDF motif 3 signature appears at 767–771 (DFADF). Residues Ser-804, Ser-844, Ser-847, Ser-901, Ser-911, Ser-927, Ser-974, Ser-998, Ser-1065, Ser-1067, Ser-1079, and Ser-1090 each carry the phosphoserine modification. 2 disordered regions span residues 986–1016 (PTVDRSQETSCPSPASSVASHETPKEGADDF) and 1065–1090 (SLSLGDKEISRSSPSPALEQPFRDRS). Residues 993-1005 (ETSCPSPASSVAS) show a composition bias toward polar residues. Thr-1092 is modified (phosphothreonine).

In terms of assembly, self-associates. Interacts with GGA1 (via GAE domain). Interacts with GGA2 and GGA3. Interacts with AP1G1 (via GAE domain), a subunit of adapter protein complex AP-1. Interacts with AP1G2 (via GAE domain) a subunit of adapter protein complex AP-1. Component of the aftiphilin/p200/gamma-synergin complex, at least composed of AFTPH/aftiphilin, HEATR5B/p200a and SYNRG/gamma-synergin, which plays a role in the AP1G1/AP-1-mediated trafficking of transferrin from early to recycling endosomes. Within the complex interacts with AFTPH/aftiphilin and HEATR5B/p200a; the interactions are direct. Interacts (via EH domain) with SCAMP1.

It is found in the cytoplasm. Its subcellular location is the cytosol. It localises to the golgi apparatus. The protein resides in the trans-Golgi network membrane. The protein localises to the perinuclear region. It is found in the cytoplasmic vesicle. Its subcellular location is the clathrin-coated vesicle. In terms of biological role, plays a role in endocytosis and/or membrane trafficking at the trans-Golgi network (TGN). May act by linking the adapter protein complex AP-1 to other proteins. Component of clathrin-coated vesicles. Component of the aftiphilin/p200/gamma-synergin complex, which plays roles in AP1G1/AP-1-mediated protein trafficking including the trafficking of transferrin from early to recycling endosomes, and the membrane trafficking of furin and the lysosomal enzyme cathepsin D between the trans-Golgi network (TGN) and endosomes. The sequence is that of Synergin gamma (Synrg) from Mus musculus (Mouse).